Reading from the N-terminus, the 249-residue chain is Small ribosomal subunit protein uS2 (249 aa).

It belongs to the universal ribosomal protein uS2 family.

This is Small ribosomal subunit protein uS2 from Polynucleobacter asymbioticus (strain DSM 18221 / CIP 109841 / QLW-P1DMWA-1) (Polynucleobacter necessarius subsp. asymbioticus).